Consider the following 486-residue polypeptide: MNFQQSAIPPFSFLLSFTQGFLLGQLSVVLLIGAFIKFFIFGEAPPPPSRGLSHRASTHRRSNSIYTISTNEAGSRSLREKPSTSNVLRPVPSSSTNTRSILRKTYYGAIPTNPSKHGRHRVHHSSHQPESLDWFNVLIAQTIAQYRQTAYLLKDEPTSSILSSLTAALNNPEKKPSFIDKITVTDISLGEEFPIFSNCRIIAVDDPNSDGGRLQALMDVDLSDDNLSIGIETSLLLNYPKPGSAILPVALSISVVRFSGTLCISLVPASTPPLHTPSPSPAPQTADGARTQSQPENNSSNPNQQSADASGAPPKTSPKSNVAFSFLPDYRLDLSVRSLIGSRSRLQDVPKVAQLVEARVHAWFEERVVEPRVQVVGLPDLWPRMGRTGVRTGEDSETGSNAASRSAISADLGSSLRDDLDQGPDGLRFRGPLGARPQFDSVSRSSSFNVETGGFHGHPMTREDSRGAISDDFHMPGSLPDGAVGN.

Topologically, residues 1–20 (MNFQQSAIPPFSFLLSFTQG) are lumenal. A helical transmembrane segment spans residues 21–41 (FLLGQLSVVLLIGAFIKFFIF). The Cytoplasmic segment spans residues 42-486 (GEAPPPPSRG…GSLPDGAVGN (445 aa)). 3 disordered regions span residues 70 to 96 (TNEA…SSST), 271 to 320 (TPPL…SPKS), and 387 to 486 (RTGV…AVGN). The segment covering 83–96 (STSNVLRPVPSSST) has biased composition (polar residues). The SMP-LTD domain occupies 128–379 (QPESLDWFNV…EPRVQVVGLP (252 aa)). A compositionally biased stretch (pro residues) spans 271–282 (TPPLHTPSPSPA). A compositionally biased stretch (low complexity) spans 292–306 (QSQPENNSSNPNQQS). Composition is skewed to polar residues over residues 398–407 (TGSNAASRSA) and 440–450 (DSVSRSSSFNV). Positions 460 to 474 (MTREDSRGAISDDFH) are enriched in basic and acidic residues.

Belongs to the MMM1 family. In terms of assembly, homodimer. Component of the ER-mitochondria encounter structure (ERMES) or MDM complex, composed of mmm1, mdm10, mdm12 and mdm34. A mmm1 homodimer associates with one molecule of mdm12 on each side in a pairwise head-to-tail manner, and the SMP-LTD domains of mmm1 and mdm12 generate a continuous hydrophobic tunnel for phospholipid trafficking.

The protein resides in the endoplasmic reticulum membrane. In terms of biological role, component of the ERMES/MDM complex, which serves as a molecular tether to connect the endoplasmic reticulum (ER) and mitochondria. Components of this complex are involved in the control of mitochondrial shape and protein biogenesis, and function in nonvesicular lipid trafficking between the ER and mitochondria. The mdm12-mmm1 subcomplex functions in the major beta-barrel assembly pathway that is responsible for biogenesis of all outer membrane beta-barrel proteins, and acts in a late step after the SAM complex. The mdm10-mdm12-mmm1 subcomplex further acts in the TOM40-specific pathway after the action of the mdm12-mmm1 complex. Essential for establishing and maintaining the structure of mitochondria and maintenance of mtDNA nucleoids. The protein is Maintenance of mitochondrial morphology protein 1 of Aspergillus terreus (strain NIH 2624 / FGSC A1156).